Here is a 1073-residue protein sequence, read N- to C-terminus: DNA-directed RNA polymerase subunit beta (1073 aa).

It belongs to the RNA polymerase beta chain family. In terms of assembly, in plastids the minimal PEP RNA polymerase catalytic core is composed of four subunits: alpha, beta, beta', and beta''. When a (nuclear-encoded) sigma factor is associated with the core the holoenzyme is formed, which can initiate transcription.

The protein localises to the plastid. It localises to the chloroplast. It catalyses the reaction RNA(n) + a ribonucleoside 5'-triphosphate = RNA(n+1) + diphosphate. Functionally, DNA-dependent RNA polymerase catalyzes the transcription of DNA into RNA using the four ribonucleoside triphosphates as substrates. The polypeptide is DNA-directed RNA polymerase subunit beta (Aethionema grandiflorum (Persian stone-cress)).